Reading from the N-terminus, the 452-residue chain is Chromosomal replication initiator protein DnaA (452 aa).

The tract at residues 1-80 (MSSTVSTLWR…NNDQFMVKIQ (80 aa)) is domain I, interacts with DnaA modulators. The tract at residues 80–114 (QDGIKPTEKTTTNVEQKTQNENCHNEITSQQNYRS) is domain II. Residues 115–332 (YLNKNHVFDN…GALNRVHAHA (218 aa)) are domain III, AAA+ region. ATP contacts are provided by Gly160, Gly162, Lys163, and Thr164. The interval 333–452 (EFTGKAITID…WSNLIRTLSV (120 aa)) is domain IV, binds dsDNA.

The protein belongs to the DnaA family. Oligomerizes as a right-handed, spiral filament on DNA at oriC.

The protein localises to the cytoplasm. Plays an essential role in the initiation and regulation of chromosomal replication. ATP-DnaA binds to the origin of replication (oriC) to initiate formation of the DNA replication initiation complex once per cell cycle. Binds the DnaA box (a 9 base pair repeat at the origin) and separates the double-stranded (ds)DNA. Forms a right-handed helical filament on oriC DNA; dsDNA binds to the exterior of the filament while single-stranded (ss)DNA is stabiized in the filament's interior. The ATP-DnaA-oriC complex binds and stabilizes one strand of the AT-rich DNA unwinding element (DUE), permitting loading of DNA polymerase. After initiation quickly degrades to an ADP-DnaA complex that is not apt for DNA replication. Binds acidic phospholipids. The chain is Chromosomal replication initiator protein DnaA from Histophilus somni (strain 129Pt) (Haemophilus somnus).